Consider the following 126-residue polypeptide: Profilin-1B (126 aa).

The interval 2–36 is actin binding; the sequence is SWQTYVDTNLVGTGAVTQAAILGLDGNTWATSAGF. Lysine 104 bears the N6,N6,N6-trimethyllysine mark.

It belongs to the profilin family. Occurs in many kinds of cells as a complex with monomeric actin in a 1:1 ratio.

Its subcellular location is the cytoplasm. The protein localises to the cytoskeleton. Binds to actin and affects the structure of the cytoskeleton. At high concentrations, profilin prevents the polymerization of actin, whereas it enhances it at low concentrations. By binding to PIP2, it inhibits the formation of IP3 and DG. The protein is Profilin-1B of Acanthamoeba castellanii (Amoeba).